We begin with the raw amino-acid sequence, 295 residues long: Polyprenyl transferase dpmaC (295 aa).

8 consecutive transmembrane segments (helical) span residues 39–59, 84–104, 109–124, 131–151, 168–188, 213–233, 237–257, and 271–291; these read LFCV…NDWI, QAFV…HVML, VHVI…YPFL, KLHI…AIPG, YCLP…TAYS, LVLV…LTQF, WLWV…LALF, and SNFV…LLKA.

The protein belongs to the UbiA prenyltransferase family. Mg(2+) serves as cofactor.

The protein resides in the membrane. It functions in the pathway secondary metabolite biosynthesis; terpenoid biosynthesis. Polyprenyl transferase; part of the gene cluster that mediates the biosynthesis of the diterpenoid pyrones subglutinols A and B. The first step of the pathway is the synthesis of the alpha-pyrone moiety by the polyketide synthase dpmaA via condensation of one acetyl-CoA starter unit with 3 malonyl-CoA units and 2 methylations. The alpha-pyrone is then combined with geranylgeranyl pyrophosphate (GGPP) formed by the GGPP synthase dpmaD through the action of the prenyltransferase dpmaC to yield a linear alpha-pyrone diterpenoid. Subsequent steps in the diterpenoid pyrone biosynthetic pathway involve the decalin core formation, which is initiated by the epoxidation of the C10-C11 olefin by the FAD-dependent oxidoreductase dpmaE, and is followed by a cyclization cascade catalyzed by the terpene cyclase dpmaB. The dehydrogenase dpmaF is then involved in tetrahydrofuran (THF) ring formation at the C5 unit to complete the formation of subglutinols A and B. In Metarhizium anisopliae (Entomophthora anisopliae), this protein is Polyprenyl transferase dpmaC.